A 222-amino-acid polypeptide reads, in one-letter code: Riboflavin kinase (222 aa).

Positions 1 to 92 (MVLAEDLECL…CRLFAHEGGH (92 aa)) are H-T-H motif-like. The segment at 93 to 222 (YTLPGIVISG…DRVNVEVAYD (130 aa)) is riboflavin kinase. Residue 102–107 (GLGEGR) participates in CDP binding. Thr131 and Asn133 together coordinate Mg(2+). Ser188 and Glu196 together coordinate FMN. 201–204 (VGLR) lines the CDP pocket.

This sequence belongs to the archaeal riboflavin kinase family. The cofactor is Mg(2+).

The catalysed reaction is riboflavin + CTP = CDP + FMN + H(+). The protein operates within cofactor biosynthesis; FMN biosynthesis; FMN from riboflavin (CTP route): step 1/1. Its function is as follows. Catalyzes the CTP-dependent phosphorylation of riboflavin (vitamin B2) to form flavin mononucleotide (FMN). The sequence is that of Riboflavin kinase (ribK) from Methanoregula boonei (strain DSM 21154 / JCM 14090 / 6A8).